A 502-amino-acid chain; its full sequence is Probable cytochrome P450 28d1 (502 aa).

Cysteine 446 provides a ligand contact to heme.

It belongs to the cytochrome P450 family. Heme is required as a cofactor.

Its subcellular location is the endoplasmic reticulum membrane. The protein localises to the microsome membrane. Its function is as follows. May be involved in the metabolism of insect hormones and in the breakdown of synthetic insecticides. The polypeptide is Probable cytochrome P450 28d1 (Cyp28d1) (Drosophila melanogaster (Fruit fly)).